We begin with the raw amino-acid sequence, 308 residues long: Apolipoprotein E (308 aa).

Positions 1–18 (MKFLWAALVVTLLAGCRA) are cleaved as a signal peptide. Tandem repeats lie at residues 75–96 (LLIEETMKEVKAYKEELEKQVG), 97–118 (PIAQETQARLSKELQAAQARLE), 119–140 (SDMEDVRTRLAQYRSEAQAALG), 141–162 (QNTDDLQGRLASHLRKLRKRLL), 163–184 (RDAEDLQKRLAVYQAGTREAAE), 185–206 (RGVSAVHERLGPLMMEGPLQAI), 207–224 (PPSQQLRERAEAWGQKVR), and 225–246 (GRLESVGSQARDRLDDMRDQME). The 8 X 22 AA approximate tandem repeats stretch occupies residues 75-246 (LLIEETMKEV…RLDDMRDQME (172 aa)). The LDL and other lipoprotein receptors binding stretch occupies residues 153 to 163 (HLRKLRKRLLR). 157 to 160 (LRKR) is a heparin binding site. The segment at 205 to 281 (AIPPSQQLRE…SWFEPLVQDM (77 aa)) is lipid-binding and lipoprotein association. 220 to 227 (GQKVRGRL) contributes to the heparin binding site. The segment at 257–308 (SQVRLQAEAFQTRLKSWFEPLVQDMQRQWASLVEKVQSTLGISPSTKPSKTK) is homooligomerization. The tract at residues 269–281 (RLKSWFEPLVQDM) is specificity for association with VLDL.

This sequence belongs to the apolipoprotein A1/A4/E family. In terms of assembly, homotetramer. May interact with ABCA1; functionally associated with ABCA1 in the biogenesis of HDLs. May interact with APP/A4 amyloid-beta peptide; the interaction is extremely stable in vitro but its physiological significance is unclear. May interact with MAPT. May interact with MAP2. In the cerebrospinal fluid, interacts with secreted SORL1. Interacts with PMEL; this allows the loading of PMEL luminal fragment on ILVs to induce fibril nucleation. APOE exists as multiple glycosylated and sialylated glycoforms within cells and in plasma. The extent of glycosylation and sialylation are tissue and context specific. Post-translationally, glycated in plasma VLDL. In terms of processing, phosphorylated by FAM20C in the extracellular medium.

The protein localises to the secreted. It is found in the extracellular space. Its subcellular location is the extracellular matrix. The protein resides in the extracellular vesicle. It localises to the endosome. The protein localises to the multivesicular body. In terms of biological role, APOE is an apolipoprotein, a protein associating with lipid particles, that mainly functions in lipoprotein-mediated lipid transport between organs via the plasma and interstitial fluids. APOE is a core component of plasma lipoproteins and is involved in their production, conversion and clearance. Apolipoproteins are amphipathic molecules that interact both with lipids of the lipoprotein particle core and the aqueous environment of the plasma. As such, APOE associates with chylomicrons, chylomicron remnants, very low density lipoproteins (VLDL) and intermediate density lipoproteins (IDL) but shows a preferential binding to high-density lipoproteins (HDL). It also binds a wide range of cellular receptors including the LDL receptor/LDLR and the very low-density lipoprotein receptor/VLDLR that mediate the cellular uptake of the APOE-containing lipoprotein particles. Finally, APOE also has a heparin-binding activity and binds heparan-sulfate proteoglycans on the surface of cells, a property that supports the capture and the receptor-mediated uptake of APOE-containing lipoproteins by cells. The chain is Apolipoprotein E (APOE) from Pteropus vampyrus (Large flying fox).